We begin with the raw amino-acid sequence, 376 residues long: Adipocyte plasma membrane-associated protein (376 aa).

The helical transmembrane segment at 1–17 (MTFLMLAVSLAIPLLGA) threads the bilayer. The N-linked (GlcNAc...) asparagine glycan is linked to Asn120.

This sequence belongs to the strictosidine synthase family.

The protein localises to the membrane. Exhibits strong arylesterase activity with beta-naphthyl acetate and phenyl acetate. May play a role in adipocyte differentiation. The protein is Adipocyte plasma membrane-associated protein (Apmap) of Rattus norvegicus (Rat).